A 192-amino-acid chain; its full sequence is Peptidyl-tRNA hydrolase (192 aa).

Y17 provides a ligand contact to tRNA. H22 acts as the Proton acceptor in catalysis. TRNA-binding residues include F68, N70, and N116.

The protein belongs to the PTH family. In terms of assembly, monomer.

Its subcellular location is the cytoplasm. The enzyme catalyses an N-acyl-L-alpha-aminoacyl-tRNA + H2O = an N-acyl-L-amino acid + a tRNA + H(+). In terms of biological role, hydrolyzes ribosome-free peptidyl-tRNAs (with 1 or more amino acids incorporated), which drop off the ribosome during protein synthesis, or as a result of ribosome stalling. Catalyzes the release of premature peptidyl moieties from peptidyl-tRNA molecules trapped in stalled 50S ribosomal subunits, and thus maintains levels of free tRNAs and 50S ribosomes. The sequence is that of Peptidyl-tRNA hydrolase from Hydrogenovibrio crunogenus (strain DSM 25203 / XCL-2) (Thiomicrospira crunogena).